The chain runs to 218 residues: MKTNELKRLVARKVVDYINPGSVIGIGTGSTVSYFIEVLSTIKNLISGAVSSSNFSTACLKRIGIPIYDLSKINSLVLYIDSADEINPQLQMIKGGGAALTREKIIAATAEKFICIADESKQVEILGKVPLPIEIIPMARSYISNEIIKIGGMPKYRKNVITDNGNVIIDVFNLVITDPVCLENKINSFPGVVSVGLFATRKADIALIGTSSGVQVIY.

Residues 28–31 (TGST), 81–84 (DSAD), and 94–97 (KGGG) each bind substrate. E103 (proton acceptor) is an active-site residue. K121 contributes to the substrate binding site.

The protein belongs to the ribose 5-phosphate isomerase family. In terms of assembly, homodimer.

It carries out the reaction aldehydo-D-ribose 5-phosphate = D-ribulose 5-phosphate. Its pathway is carbohydrate degradation; pentose phosphate pathway; D-ribose 5-phosphate from D-ribulose 5-phosphate (non-oxidative stage): step 1/1. Functionally, catalyzes the reversible conversion of ribose-5-phosphate to ribulose 5-phosphate. This Buchnera aphidicola subsp. Baizongia pistaciae (strain Bp) protein is Ribose-5-phosphate isomerase A.